The primary structure comprises 492 residues: UDP-N-acetylmuramoyl-L-alanyl-D-glutamate--2,6-diaminopimelate ligase (492 aa).

S30 lines the UDP-N-acetyl-alpha-D-muramoyl-L-alanyl-D-glutamate pocket. G114–S120 lines the ATP pocket. UDP-N-acetyl-alpha-D-muramoyl-L-alanyl-D-glutamate contacts are provided by residues T156 to T157, S183, Q189, and R191. Residue K223 is modified to N6-carboxylysine. Meso-2,6-diaminopimelate is bound by residues R389, D413–R416, G462, and E466. A Meso-diaminopimelate recognition motif motif is present at residues D413–R416.

The protein belongs to the MurCDEF family. MurE subfamily. The cofactor is Mg(2+). In terms of processing, carboxylation is probably crucial for Mg(2+) binding and, consequently, for the gamma-phosphate positioning of ATP.

It localises to the cytoplasm. The enzyme catalyses UDP-N-acetyl-alpha-D-muramoyl-L-alanyl-D-glutamate + meso-2,6-diaminopimelate + ATP = UDP-N-acetyl-alpha-D-muramoyl-L-alanyl-gamma-D-glutamyl-meso-2,6-diaminopimelate + ADP + phosphate + H(+). Its pathway is cell wall biogenesis; peptidoglycan biosynthesis. Its function is as follows. Catalyzes the addition of meso-diaminopimelic acid to the nucleotide precursor UDP-N-acetylmuramoyl-L-alanyl-D-glutamate (UMAG) in the biosynthesis of bacterial cell-wall peptidoglycan. The sequence is that of UDP-N-acetylmuramoyl-L-alanyl-D-glutamate--2,6-diaminopimelate ligase from Neisseria meningitidis serogroup A / serotype 4A (strain DSM 15465 / Z2491).